The primary structure comprises 156 residues: MPRKGHVTKRAVLADPVYNSKLVTKLINHLMIDGKRAKASSILYDAFNIVQDKTGKEPLDVFEEAMNNVMPVLEVRARRIGGSNYQIPVEVRPERRTTLGLRWLVSYARLRNEHTMDERLANEIIDASNNTGSAVKKREDVHRMAEANRAFAHYRF.

The protein belongs to the universal ribosomal protein uS7 family. In terms of assembly, part of the 30S ribosomal subunit. Contacts proteins S9 and S11.

One of the primary rRNA binding proteins, it binds directly to 16S rRNA where it nucleates assembly of the head domain of the 30S subunit. Is located at the subunit interface close to the decoding center, probably blocks exit of the E-site tRNA. This Lactobacillus helveticus (strain DPC 4571) protein is Small ribosomal subunit protein uS7.